A 228-amino-acid polypeptide reads, in one-letter code: Ribosomal RNA small subunit methyltransferase G (228 aa).

S-adenosyl-L-methionine-binding positions include glycine 89, leucine 94, 140 to 141 (VE), and arginine 159.

Belongs to the methyltransferase superfamily. RNA methyltransferase RsmG family.

The protein localises to the cytoplasm. The enzyme catalyses guanosine(527) in 16S rRNA + S-adenosyl-L-methionine = N(7)-methylguanosine(527) in 16S rRNA + S-adenosyl-L-homocysteine. Functionally, specifically methylates the N7 position of guanine in position 527 of 16S rRNA. The chain is Ribosomal RNA small subunit methyltransferase G from Burkholderia ambifaria (strain ATCC BAA-244 / DSM 16087 / CCUG 44356 / LMG 19182 / AMMD) (Burkholderia cepacia (strain AMMD)).